The chain runs to 605 residues: Cell wall integrity and stress response component 4 (605 aa).

Residues 1-26 (MQTSMVSAKVSIWLVCSVICSSLVRA) form the signal peptide. One can recognise a WSC domain in the interval 27–110 (TQSVCSSQNT…DKDLFGYIYL (84 aa)). The tract at residues 151 to 305 (SPTLTSTSTT…PSSTTVTYTS (155 aa)) is disordered. Asn340, Asn386, Asn389, and Asn398 each carry an N-linked (GlcNAc...) asparagine glycan. Over residues 381 to 399 (RITNNNNSNTTNSNTPTNK) the composition is skewed to low complexity. Residues 381–404 (RITNNNNSNTTNSNTPTNKSTEKK) are disordered. The chain crosses the membrane as a helical span at residues 415–435 (ATFVVVGVVCLVIICILIYLI). N-linked (GlcNAc...) asparagine glycosylation is present at Asn479. The disordered stretch occupies residues 494–521 (GQIMSESPSPRQSTYSLTAGSPPNDPST). The segment covering 497–521 (MSESPSPRQSTYSLTAGSPPNDPST) has biased composition (polar residues). N-linked (GlcNAc...) asparagine glycans are attached at residues Asn553 and Asn583.

The protein localises to the membrane. This is Cell wall integrity and stress response component 4 (WSC4) from Saccharomyces cerevisiae (strain ATCC 204508 / S288c) (Baker's yeast).